Consider the following 88-residue polypeptide: Small ribosomal subunit protein uS15 (88 aa).

The protein belongs to the universal ribosomal protein uS15 family. As to quaternary structure, part of the 30S ribosomal subunit. Forms a bridge to the 50S subunit in the 70S ribosome, contacting the 23S rRNA.

In terms of biological role, one of the primary rRNA binding proteins, it binds directly to 16S rRNA where it helps nucleate assembly of the platform of the 30S subunit by binding and bridging several RNA helices of the 16S rRNA. Its function is as follows. Forms an intersubunit bridge (bridge B4) with the 23S rRNA of the 50S subunit in the ribosome. This Desulfitobacterium hafniense (strain Y51) protein is Small ribosomal subunit protein uS15.